Here is a 210-residue protein sequence, read N- to C-terminus: Peptidyl-tRNA hydrolase (210 aa).

Tyrosine 14 is a tRNA binding site. Catalysis depends on histidine 19, which acts as the Proton acceptor. The tRNA site is built by phenylalanine 64, asparagine 66, and asparagine 112.

This sequence belongs to the PTH family. As to quaternary structure, monomer.

The protein localises to the cytoplasm. The enzyme catalyses an N-acyl-L-alpha-aminoacyl-tRNA + H2O = an N-acyl-L-amino acid + a tRNA + H(+). In terms of biological role, hydrolyzes ribosome-free peptidyl-tRNAs (with 1 or more amino acids incorporated), which drop off the ribosome during protein synthesis, or as a result of ribosome stalling. Catalyzes the release of premature peptidyl moieties from peptidyl-tRNA molecules trapped in stalled 50S ribosomal subunits, and thus maintains levels of free tRNAs and 50S ribosomes. The sequence is that of Peptidyl-tRNA hydrolase from Methylorubrum populi (strain ATCC BAA-705 / NCIMB 13946 / BJ001) (Methylobacterium populi).